Here is a 353-residue protein sequence, read N- to C-terminus: DNA integrity scanning protein DisA (353 aa).

The DAC domain occupies 6–144; it reads DKELMNILKI…GGIKYVLRDS (139 aa). ATP contacts are provided by residues Gly-73, Leu-91, and 104–108; that span reads TRHRT.

The protein belongs to the DisA family. Homooctamer. Requires Mg(2+) as cofactor.

The catalysed reaction is 2 ATP = 3',3'-c-di-AMP + 2 diphosphate. Its function is as follows. Participates in a DNA-damage check-point that is active prior to asymmetric division when DNA is damaged. DisA forms globular foci that rapidly scan along the chromosomes during sporulation, searching for lesions. When a lesion is present, DisA pauses at the lesion site. This triggers a cellular response that culminates in a temporary block in sporulation initiation. In terms of biological role, also has diadenylate cyclase activity, catalyzing the condensation of 2 ATP molecules into cyclic di-AMP (c-di-AMP). c-di-AMP acts as a signaling molecule that couples DNA integrity with progression of sporulation. The rise in c-di-AMP level generated by DisA while scanning the chromosome, operates as a positive signal that advances sporulation; upon encountering a lesion, the DisA focus arrests at the damaged site and halts c-di-AMP synthesis. This is DNA integrity scanning protein DisA from Clostridium botulinum (strain 657 / Type Ba4).